An 87-amino-acid polypeptide reads, in one-letter code: MKFATCFLVSYVLVFLVLSVCKEVEAKELCNRIEDIDGNCDFEGEKGCLKFMTNKYKKERHVSCTCTNLYMLHKTKRFCDCKHRCSG.

The signal sequence occupies residues 1 to 26; the sequence is MKFATCFLVSYVLVFLVLSVCKEVEA. Disulfide bonds link Cys-30-Cys-85, Cys-40-Cys-66, Cys-48-Cys-79, and Cys-64-Cys-81.

The protein belongs to the DEFL family.

It localises to the secreted. This Arabidopsis thaliana (Mouse-ear cress) protein is Putative defensin-like protein 231 (SCRL25).